The primary structure comprises 301 residues: Phosphate transport system permease protein PstA 2 (301 aa).

The next 6 membrane-spanning stretches (helical) occupy residues 36–56 (ACVC…IGVV), 83–103 (IIGT…VSVL), 127–147 (LSGI…VVYF), 149–169 (WGFS…PYIA), 209–229 (GIVT…APLL), and 274–294 (ALLL…INWL). The ABC transmembrane type-1 domain maps to 83-288 (IIGTAVLAIG…VFLLLLIFIG (206 aa)).

The protein belongs to the binding-protein-dependent transport system permease family. CysTW subfamily.

The protein resides in the cell membrane. Part of the binding-protein-dependent transport system for phosphate; probably responsible for the translocation of the substrate across the membrane. The polypeptide is Phosphate transport system permease protein PstA 2 (pstA2) (Mycobacterium bovis (strain ATCC BAA-935 / AF2122/97)).